The sequence spans 102 residues: Small ribosomal subunit protein uS14 (102 aa).

The protein belongs to the universal ribosomal protein uS14 family. In terms of assembly, part of the 30S ribosomal subunit. Contacts proteins S3 and S10.

Functionally, binds 16S rRNA, required for the assembly of 30S particles and may also be responsible for determining the conformation of the 16S rRNA at the A site. The polypeptide is Small ribosomal subunit protein uS14 (Wolbachia sp. subsp. Brugia malayi (strain TRS)).